Here is a 76-residue protein sequence, read N- to C-terminus: uncharacterized protein (76 aa).

Positions 1-28 (MSTEKLEASEEPQAPLANTSETNSIKGD) are disordered. The span at 16–26 (LANTSETNSIK) shows a compositional bias: polar residues.

It is found in the cytoplasm. The protein resides in the bud. It localises to the bud neck. This is an uncharacterized protein from Saccharomyces cerevisiae (strain ATCC 204508 / S288c) (Baker's yeast).